A 169-amino-acid polypeptide reads, in one-letter code: Peptide deformylase (169 aa).

Fe cation contacts are provided by Cys91 and His133. Residue Glu134 is part of the active site. His137 contributes to the Fe cation binding site.

Belongs to the polypeptide deformylase family. It depends on Fe(2+) as a cofactor.

It carries out the reaction N-terminal N-formyl-L-methionyl-[peptide] + H2O = N-terminal L-methionyl-[peptide] + formate. Its function is as follows. Removes the formyl group from the N-terminal Met of newly synthesized proteins. Requires at least a dipeptide for an efficient rate of reaction. N-terminal L-methionine is a prerequisite for activity but the enzyme has broad specificity at other positions. This is Peptide deformylase from Aliivibrio salmonicida (strain LFI1238) (Vibrio salmonicida (strain LFI1238)).